Here is a 569-residue protein sequence, read N- to C-terminus: Aspartokinase 1, chloroplastic (569 aa).

The N-terminal 90 residues, 1–90 (MAATRVRCCH…VDEKGITCVM (90 aa)), are a transit peptide targeting the chloroplast. Lysine 91, glycine 94, and serine 123 together coordinate ATP. Glutamate 207 contributes to the substrate binding site. ACT domains are found at residues 405–483 (IAST…AIIS) and 484–560 (LIGN…GNGS). L-lysine-binding residues include glutamine 413 and glycine 415. Serine 430 lines the S-adenosyl-L-methionine pocket. L-lysine-binding residues include valine 431, aspartate 432, and serine 437. 2 residues coordinate S-adenosyl-L-methionine: serine 452 and arginine 453.

This sequence belongs to the aspartokinase family. Homodimer.

The protein resides in the plastid. The protein localises to the chloroplast. It catalyses the reaction L-aspartate + ATP = 4-phospho-L-aspartate + ADP. The protein operates within amino-acid biosynthesis; L-lysine biosynthesis via DAP pathway; (S)-tetrahydrodipicolinate from L-aspartate: step 1/4. Its pathway is amino-acid biosynthesis; L-methionine biosynthesis via de novo pathway; L-homoserine from L-aspartate: step 1/3. It participates in amino-acid biosynthesis; L-threonine biosynthesis; L-threonine from L-aspartate: step 1/5. Inhibited by S-adenosyl-L-methionine (SAM) and lysine in a synergistic manner. No inhibition by threonine, leucine or SAM alone, and no activation or inhibition by alanine, cysteine, isoleucine, serine, valine, methionine, glutamine, asparagine, glutamic acid or arginine. Involved in the first step of essential amino acids lysine, threonine, methionine and isoleucine synthesis via the aspartate-family pathway. This Arabidopsis thaliana (Mouse-ear cress) protein is Aspartokinase 1, chloroplastic (AK1).